The sequence spans 237 residues: Class B acid phosphatase (237 aa).

The signal sequence occupies residues 1-25; sequence MRKLTLAFAAASLLFTLNSAVVARA. The active-site Nucleophile is D69. Residues D69 and D71 each contribute to the Mg(2+) site. Residue D71 is the Proton donor of the active site. Substrate-binding positions include 137–138 and K177; that span reads TG. D192 lines the Mg(2+) pocket.

The protein belongs to the class B bacterial acid phosphatase family. In terms of assembly, homotetramer. Mg(2+) is required as a cofactor.

It localises to the periplasm. It catalyses the reaction a phosphate monoester + H2O = an alcohol + phosphate. Dephosphorylates several organic phosphate monoesters. Also has a phosphotransferase activity catalyzing the transfer of low-energy phosphate groups from organic phosphate monoesters to free hydroxyl groups of various organic compounds. The protein is Class B acid phosphatase of Klebsiella pneumoniae (strain 342).